The following is a 468-amino-acid chain: Argininosuccinate lyase (468 aa).

The protein belongs to the lyase 1 family. Argininosuccinate lyase subfamily.

The protein localises to the cytoplasm. It catalyses the reaction 2-(N(omega)-L-arginino)succinate = fumarate + L-arginine. It functions in the pathway amino-acid biosynthesis; L-arginine biosynthesis; L-arginine from L-ornithine and carbamoyl phosphate: step 3/3. In Paraburkholderia xenovorans (strain LB400), this protein is Argininosuccinate lyase.